The chain runs to 291 residues: 4-diphosphocytidyl-2-C-methyl-D-erythritol kinase (291 aa).

Residue lysine 8 is part of the active site. 89 to 99 (PIGSGIGGGSS) lines the ATP pocket. Residue aspartate 131 is part of the active site.

This sequence belongs to the GHMP kinase family. IspE subfamily.

It carries out the reaction 4-CDP-2-C-methyl-D-erythritol + ATP = 4-CDP-2-C-methyl-D-erythritol 2-phosphate + ADP + H(+). It participates in isoprenoid biosynthesis; isopentenyl diphosphate biosynthesis via DXP pathway; isopentenyl diphosphate from 1-deoxy-D-xylulose 5-phosphate: step 3/6. In terms of biological role, catalyzes the phosphorylation of the position 2 hydroxy group of 4-diphosphocytidyl-2C-methyl-D-erythritol. This Chlamydia abortus (strain DSM 27085 / S26/3) (Chlamydophila abortus) protein is 4-diphosphocytidyl-2-C-methyl-D-erythritol kinase.